Consider the following 302-residue polypeptide: Aurora/IPL1-related protein kinase 2 (302 aa).

Residues 1 to 17 (MENKPQILQTKSKNTPN) show a composition bias toward polar residues. Positions 1-23 (MENKPQILQTKSKNTPNKGGKLS) are disordered. A Protein kinase domain is found at 27–277 (FEIGRPLGKG…LQEVKDHYWV (251 aa)). Residues 33–41 (LGKGKFGSV) and lysine 56 contribute to the ATP site. Catalysis depends on aspartate 150, which acts as the Proton acceptor.

It belongs to the protein kinase superfamily. Ser/Thr protein kinase family. In terms of assembly, interacts with zen-4 and icp-1. Part of a complex containing at least air-2; icp-1; csc-1 and bir-1. Interacts with tlk-1 and bmk-1.

The protein resides in the cytoplasm. The protein localises to the cytoskeleton. It localises to the chromosome. Its subcellular location is the midbody. The catalysed reaction is L-seryl-[protein] + ATP = O-phospho-L-seryl-[protein] + ADP + H(+). It carries out the reaction L-threonyl-[protein] + ATP = O-phospho-L-threonyl-[protein] + ADP + H(+). In terms of biological role, serine/threonine-protein kinase which mediates both meiotic and mitotic chromosome segregation. Required for histone H3 'Ser-10' phosphorylation. Phosphorylates tlk-1 and zen-4. In Caenorhabditis briggsae, this protein is Aurora/IPL1-related protein kinase 2 (air-2).